Reading from the N-terminus, the 192-residue chain is Small ribosomal subunit protein uS5 (192 aa).

The tract at residues 1–21 (MAAERERGGRERGGRDRDERD) is disordered. One can recognise an S5 DRBM domain in the interval 24–87 (FVDKLVHINR…DSAKRNLTRV (64 aa)).

The protein belongs to the universal ribosomal protein uS5 family. As to quaternary structure, part of the 30S ribosomal subunit. Contacts proteins S4 and S8.

Its function is as follows. With S4 and S12 plays an important role in translational accuracy. In terms of biological role, located at the back of the 30S subunit body where it stabilizes the conformation of the head with respect to the body. The protein is Small ribosomal subunit protein uS5 of Afipia carboxidovorans (strain ATCC 49405 / DSM 1227 / KCTC 32145 / OM5) (Oligotropha carboxidovorans).